Reading from the N-terminus, the 804-residue chain is Serine/threonine-protein kinase ATG1 (804 aa).

The 297-residue stretch at 12 to 308 (FTIGPEIGRG…FQEFFNDPLI (297 aa)) folds into the Protein kinase domain. Residues 18–26 (IGRGSFANV) and lysine 41 contribute to the ATP site. The active-site Proton acceptor is aspartate 158. Disordered regions lie at residues 339–364 (TSPP…ERAP), 395–415 (INKS…KGAR), and 455–506 (PSPH…MPIS). Basic and acidic residues predominate over residues 404–415 (TVKDGQIKKGAR). The segment covering 462-495 (NEHSAANPSGPTETQTQRRFSPSSRTSSIGSNRR) has biased composition (polar residues).

It belongs to the protein kinase superfamily. Ser/Thr protein kinase family. APG1/unc-51/ULK1 subfamily. In terms of assembly, homodimer. Forms a ternary complex with ATG13 and ATG17.

The protein localises to the cytoplasm. Its subcellular location is the preautophagosomal structure membrane. It catalyses the reaction L-seryl-[protein] + ATP = O-phospho-L-seryl-[protein] + ADP + H(+). The catalysed reaction is L-threonyl-[protein] + ATP = O-phospho-L-threonyl-[protein] + ADP + H(+). In terms of biological role, serine/threonine protein kinase involved in the cytoplasm to vacuole transport (Cvt) and found to be essential in autophagy, where it is required for the formation of autophagosomes. Involved in the clearance of protein aggregates which cannot be efficiently cleared by the proteasome. Required for selective autophagic degradation of the nucleus (nucleophagy) as well as for mitophagy which contributes to regulate mitochondrial quantity and quality by eliminating the mitochondria to a basal level to fulfill cellular energy requirements and preventing excess ROS production. Also involved in endoplasmic reticulum-specific autophagic process, in selective removal of ER-associated degradation (ERAD) substrates. Plays a key role in ATG9 and ATG23 cycling through the pre-autophagosomal structure and is necessary to promote ATG18 binding to ATG9 through phosphorylation of ATG9. Catalyzes phosphorylation of ATG4, decreasing the interaction between ATG4 and ATG8 and impairing deconjugation of PE-conjugated forms of ATG8. The protein is Serine/threonine-protein kinase ATG1 of Pichia angusta (Yeast).